The primary structure comprises 1240 residues: DNA polymerase catalytic subunit (1240 aa).

Over residues 1–26 (MFCAAGGPASPGGKSAARAASGFFAP) the composition is skewed to low complexity. Disordered stretches follow at residues 1–65 (MFCA…PAQR), 646–695 (GLDK…RETG), and 1103–1139 (AAAP…ASKP). Over residues 44-56 (NFYNPHLAQTGTQ) the composition is skewed to polar residues. Residues 669-688 (NGDEDKDDDEDGDEDGDERE) show a composition bias toward acidic residues.

The protein belongs to the DNA polymerase type-B family. As to quaternary structure, forms a complex with the ssDNA-binding protein UL29, the DNA polymerase processivity factor, and the alkaline exonuclease. Interacts with the putative helicase-primase complex subunit UL8; this interaction may coordinate leading and lagging strand DNA synthesis at the replication fork.

Its subcellular location is the host nucleus. The catalysed reaction is DNA(n) + a 2'-deoxyribonucleoside 5'-triphosphate = DNA(n+1) + diphosphate. The enzyme catalyses Endonucleolytic cleavage to 5'-phosphomonoester.. In terms of biological role, replicates viral genomic DNA. The replication complex is composed of six viral proteins: the DNA polymerase, processivity factor, primase, primase-associated factor, helicase, and ssDNA-binding protein. Additionally, the polymerase contains an intrinsic ribonuclease H (RNase H) activity that specifically degrades RNA/DNA heteroduplexes or duplex DNA substrates in the 5' to 3' direction. Therefore, it can catalyze the excision of the RNA primers that initiate the synthesis of Okazaki fragments at a replication fork during viral DNA replication. The polypeptide is DNA polymerase catalytic subunit (Human herpesvirus 2 (strain 186) (HHV-2)).